The chain runs to 57 residues: Protein 19.3 (57 aa).

The polypeptide is Protein 19.3 (Escherichia coli (Bacteriophage T7)).